Reading from the N-terminus, the 162-residue chain is Tegument protein BLRF2 (162 aa).

Positions 12-43 (VKAVDMSMEDMAARLARLESENKALKQQVLRG) form a coiled coil. The segment at 118-162 (SMLGAKGQPSPGEGTRPRESNDPNATRRARSRSRGREAKKVQISD) is disordered. Positions 151 to 162 (RGREAKKVQISD) are enriched in basic and acidic residues.

This sequence belongs to the herpesviridae BLRF2 family. In terms of assembly, homooligomer; homooligomerizes and binds double-stranded DNA (dsDNA) cooperatively. Interacts with host CGAS.

Its subcellular location is the virion tegument. The protein localises to the host cytoplasm. In terms of biological role, plays a role in the inhibition of host innate immune system by targeting the CGAS enzymatic activity which is the principal cytosolic DNA sensor that detects invading viral DNA. Acts by inhibiting CGAS-DNA phase separation: directly binds double-stranded DNA (dsDNA) in a length dependent but sequence independent manner and is able to form DNA-induced phase separation in infected cells. DNA phase separation of ORF52 mediates disruption of liquid-like droplets in which CGAS is activated, thereby preventing CGAS activity. The chain is Tegument protein BLRF2 from Homo sapiens (Human).